The sequence spans 223 residues: 2-C-methyl-D-erythritol 4-phosphate cytidylyltransferase (223 aa).

The protein belongs to the IspD/TarI cytidylyltransferase family. IspD subfamily.

It catalyses the reaction 2-C-methyl-D-erythritol 4-phosphate + CTP + H(+) = 4-CDP-2-C-methyl-D-erythritol + diphosphate. It functions in the pathway isoprenoid biosynthesis; isopentenyl diphosphate biosynthesis via DXP pathway; isopentenyl diphosphate from 1-deoxy-D-xylulose 5-phosphate: step 2/6. Its function is as follows. Catalyzes the formation of 4-diphosphocytidyl-2-C-methyl-D-erythritol from CTP and 2-C-methyl-D-erythritol 4-phosphate (MEP). The polypeptide is 2-C-methyl-D-erythritol 4-phosphate cytidylyltransferase (Prochlorococcus marinus (strain MIT 9215)).